Consider the following 416-residue polypeptide: Na(+)/H(+) antiporter NhaA (416 aa).

9 helical membrane-spanning segments follow: residues 18–38 (VGGAILLVAAAIALLWVNSPW), 59–79 (LTLADWTKDGLLAVFFFVAGL), 97–117 (ALPIIAAVGGVVTPALIAAVI), 127–147 (GWAIPVATDIAFALGVLALTG), 167–187 (LLAIILIAVLFTVGVSLLWLL), 265–285 (GICVPLFALFAAGVPLNATVF), 297–317 (VMLGLLLGKTIGIFGISWVAI), 333–353 (MFALSVLGAIGFTVSLLVAEL), and 363–383 (LAKAAVLITSLAASLAGSALL). A disordered region spans residues 396–416 (ALELQPDEGDASDPSEGGSLR).

The protein belongs to the NhaA Na(+)/H(+) (TC 2.A.33) antiporter family.

The protein resides in the cell membrane. It carries out the reaction Na(+)(in) + 2 H(+)(out) = Na(+)(out) + 2 H(+)(in). Na(+)/H(+) antiporter that extrudes sodium in exchange for external protons. This is Na(+)/H(+) antiporter NhaA from Nocardia farcinica (strain IFM 10152).